A 527-amino-acid chain; its full sequence is MKSSTTQTLIFTVFLLLIPTSFAAPPKLKDSFTQCVTVFKPSVPIQNFTYTQQNPNFLTILNNYVRNLRYFNGTTRKPVAIVAAAHFTHIQATINCAKKLGLQLRIRSGGHDYDGMSYLSTVDFVVLDMFNLRAIEIDPKLDTAWVQSGATLGEIYYNVANKSNNLRGFPAGICPGLGAGGHFSGGGYGNMMRKYGLSIDNIIDAKIVDANARVLDRSSMGEDLFWALRGGGAASFCVVLAWKIKLVPVPEKVTVFNVETIGNRGVIPTDLAAKWQEIADKIDNDLFIRLTLSSSNKTVKASFMGMYLGNSEKLLEIMNAKFPELGLNKTECIEMKWIESVLFWLSIPPGTAPTSVMLNRIPQKQIYLKRKSDYVQKPISKPGLESIFKILSENENVSMAWNPYGGRMSEIPATETAFPHRAGNMFKIQYSSNWFVPGEEAASDCLSQTERVFEAMSPYVSKNPREAFLNYRDIDIGKNLNSTYEEGKVYGVKYFKNNFERLVQVKTRVDPDNIFRYEQSIPVHVSR.

Positions 1–23 (MKSSTTQTLIFTVFLLLIPTSFA) are cleaved as a signal peptide. An intrachain disulfide couples cysteine 35 to cysteine 96. Asparagine 47, asparagine 72, asparagine 161, asparagine 296, asparagine 328, asparagine 396, and asparagine 481 each carry an N-linked (GlcNAc...) asparagine glycan. The region spanning 74–249 (TTRKPVAIVA…LAWKIKLVPV (176 aa)) is the FAD-binding PCMH-type domain. The 6-(S-cysteinyl)-8alpha-(pros-histidyl)-FAD (His-Cys) cross-link spans 111–174 (HDYDGMSYLS…NLRGFPAGIC (64 aa)).

The protein belongs to the oxygen-dependent FAD-linked oxidoreductase family. The cofactor is FAD. In terms of processing, the FAD cofactor is bound via a bicovalent 6-S-cysteinyl, 8alpha-N1-histidyl FAD linkage.

Its subcellular location is the secreted. The protein resides in the cell wall. The protein is Berberine bridge enzyme-like 14 of Arabidopsis thaliana (Mouse-ear cress).